The primary structure comprises 558 residues: Formate--tetrahydrofolate ligase (558 aa).

66-73 provides a ligand contact to ATP; that stretch reads TPAGEGKT.

Belongs to the formate--tetrahydrofolate ligase family.

The catalysed reaction is (6S)-5,6,7,8-tetrahydrofolate + formate + ATP = (6R)-10-formyltetrahydrofolate + ADP + phosphate. The protein operates within one-carbon metabolism; tetrahydrofolate interconversion. This Clostridioides difficile (strain 630) (Peptoclostridium difficile) protein is Formate--tetrahydrofolate ligase.